The primary structure comprises 65 residues: Ferredoxin soy (65 aa).

The region spanning 2 to 29 (GVQVDKERCVGAGMCALTAPDVFTQDDD) is the 4Fe-4S ferredoxin-type domain. [3Fe-4S] cluster is bound by residues cysteine 10, cysteine 16, and cysteine 55.

[3Fe-4S] cluster is required as a cofactor.

Functionally, electron transport protein for the cytochrome P-450-SOY system. In Streptomyces griseus, this protein is Ferredoxin soy (soyB).